Consider the following 148-residue polypeptide: DDCCSAADRHEVLDNWKGIWSAEFTGRRVAIGQAIFQELFALDPNAKGVFGRVNVDKPSEADWKAHVIRVINGLDLAVNLLEDPKALQEELKHLARQHRERSGVKAVYFDEMEKALLKVLPQVSSHFNSGAWDRCFTRIADVIKAELP.

In terms of domain architecture, Globin spans 3–148; that stretch reads CCSAADRHEV…IADVIKAELP (146 aa). Residues Cys-4 and Cys-135 are joined by a disulfide bond. His-98 lines the heme b pocket.

Belongs to the globin family. In terms of assembly, disulfide bonded trimer of chains IIA, IIB, and IIC.

It is found in the secreted. This is Extracellular globin-2B from Tylorrhynchus heterochetus (Japanese palolo worm).